The following is a 73-amino-acid chain: Conotoxin CnIIIG (73 aa).

Residues 1 to 19 form the signal peptide; the sequence is MSKLGVLLTICLLLLPLTA. A propeptide spanning residues 20–48 is cleaved from the precursor; it reads LPMDEDQPADQPADRMQDDISSEQYPLFD. Gln51 carries the post-translational modification Pyrrolidone carboxylic acid. Cystine bridges form between Cys53–Cys72, Cys54–Cys70, and Cys60–Cys73.

Belongs to the conotoxin M superfamily. Expressed by the venom duct.

It localises to the secreted. Shows a paralytic effect in fish. This is Conotoxin CnIIIG from Conus consors (Singed cone).